Consider the following 196-residue polypeptide: uncharacterized protein (196 aa).

The helical transmembrane segment at 20–40 threads the bilayer; that stretch reads GALALGCIALLLMGIVGCTTV.

It localises to the membrane. This is an uncharacterized protein from Mycobacterium tuberculosis (strain CDC 1551 / Oshkosh).